Reading from the N-terminus, the 2128-residue chain is MEGPSRVYLFGDQTSDIEAGLRRLLQAKNSTIVQSFFQQCFHAIRQEIAKLPPSHRKLFPRFTSIVDLLSRSRESGPSPVLESALTCIYQLGCFIHFYGDLGHDYPTPSNSHLVGLCTGVLSCTAVSCARNVGELIPAAVESVVIALRLGICVFRVRELVDSADSESTCWSALVSGISEAEASHLIDEYSSKKATPPSSKPYISAVSSNGVTVSAPPTVLDEFVETCISKNYKPVKAPIHGPYHAPHLYDDKDIDRILQQSSALEGLTGCSPVIPIISSNTGKPIKAKSIKDLFKVALEEILLRRLCWDKVTESCTSVCKTGTNHSCKLFPISSSATQSLFTVLKKAGVSISLETGVGEIATNPEMRNLTGKAENSKIAIIGMSGRFPDSDGTESFWNLLYKGLDVHRKVPADRWDVDAHVDMTGSKRNTSKVAYGCWINEPGLFDPRFFNMSPREALQADPAQRLALLTAYEALEMAGFIPDSSPSTQRDRVGIFYGMTSDDYREINSGQDIDTYFIPGGNRAFTPGRINYYFKFSGPSVSVDTACSSSLAAIHMACNSIWRNDCDAAITGGVNILTNPDNHAGLDRGHFLSTTGNCNTFDDGADGYCRADGVGSIVLKRLEDAEADNDPILAVINGAYTNHSAEAVSITRPHVGAQAFIFNKLLNDANIDPKDVSYVEMHGTGTQAGDAVEMQSVLDVFAPDYRRGPGQSLHIGSAKANIGHGESASGVTALVKVLLMMRENMIPPHCGIKTKINSNFPTDLAKRNVHIAFQPTPWNRPASGKRRTFVNNFSAAGGNTALLLEDAPIPERQGQDPRSFHLVSVSARSQSALKNNVEALVKYIDSQGKSFGVKETEFLPNLAYTTTARRIHHPFRVTAVGANLQSLRDSLHGALHRETYTPVPSTAPGIGFVFTGQGAQYSGMGKELYRSCFQFRTTIEHFDCIARSQGLPSILPLVDGSVAVEELSPVVVQVGTTCVQMALVNYWTALGVKPAFIIGHSLGDYAALNTAGVLSTSDTIYLCGRRAQLLTKECKIGTHSMLAIKASLAEVKHFLRDELHEVSCVNAPAETVVSGLVADIDELAQKCSTEGLKSTKLKVPYAFHSSQVDPILEAFEDIAQGVTFHKPTTPFVSALFGEVITDANWECLGPKYLRDHCRKTVNFLGGVEATRHAKLTNDKTLWVEIGSHTICSGMIKATLGPQVTTVASLRREEDTWKVLSNSLASLHLAGIDINWKQYHQDFSSSLQVLRLPAYKWDLKNYWIPYTNNFCLSKGAPVATVAAGPQHEYLTTAAQKVIETRSDGATATVVIENDIADPELNRVIQGHKVNGTALCPSSLYADISQTLAEYLIKKYKPEYDGLGLDVCEVTVPRPLIAKGGQQLFRVSATADWAEKKTTLQIYSVTAEGKKTADHATCTVRFFDCAAAEAEWKRVSYLVKRSIDRLHDIAENGDAHRLGRGMVYKLFAALVDYDDNFKSIREVILDSEQHEATARVKFQAPQGNFHRNPFWIDSFGHLSGFIMNASDATDSKNQVFVNHGWDSMRCLKKFSPDVTYRTYVRMQPWKDSIWAGDVYVFDGDDIVAVYGAVKFQALSRKILDTVLPPSRASAPAPAKPAAKPSAPSLVKRALTILAEEVGLSESEITDDLVFADYGVDSLLSLTVTGRYREELDIDLESSIFIDQPTVKDFKQFLAPMSQGEASDGSTSDPESSSSFNGGSSTDESSAGSPVSSPPNEKVTQVEQHATIKEIRAILADEIGVTEEELKDDENLGEMGMDSLLSLTVLGRIRETLDLDLPGEFFIENQTLNDVEDALGLKPKAAPAPAPAPAPVPAPVSAPILKEPVPNANSTIMARASPHPRSTSILLQGNPKTATKTLFLFPDGSGSATSYATIPGVSPDVCVYGLNCPYMKTPEKLKYPLAEMTFPYLAEIRRRQPKGPYNFGGWSAGGICAYDAARYLILEEGEQVDRLLLLDSPFPIGLEKLPTRLYGFINSMGLFGEGNKAPPAWLLPHFLAFIDSLDTYKAVPLPFDDPKWAKKMPKTFMVWAKDGICSKPDDPWPEPDPDGKPDTREMVWLLKNRTDMGPNKWDTLVGPQNVGGITVIEGANHFTMTLGPKAKELGSFIGNAMAN.

The N-terminal acylcarrier protein transacylase domain (SAT) stretch occupies residues 8 to 244 (YLFGDQTSDI…VKAPIHGPYH (237 aa)). The Ketosynthase family 3 (KS3) domain occupies 375–806 (NSKIAIIGMS…GGNTALLLED (432 aa)). Active-site for beta-ketoacyl synthase activity residues include C547, H682, and H724. Positions 912 to 1232 (FVFTGQGAQY…LASLHLAGID (321 aa)) are malonyl-CoA:ACP transacylase (MAT) domain. S1001 (for acyl/malonyl transferase activity) is an active-site residue. Residues 1286–1425 (HEYLTTAAQK…CTVRFFDCAA (140 aa)) are N-terminal hotdog fold. The PKS/mFAS DH domain maps to 1286–1598 (HEYLTTAAQK…FQALSRKILD (313 aa)). Residues 1290–1603 (TTAAQKVIET…RKILDTVLPP (314 aa)) are product template (PT) domain. H1326 functions as the Proton acceptor; for dehydratase activity in the catalytic mechanism. The C-terminal hotdog fold stretch occupies residues 1452 to 1598 (DAHRLGRGMV…FQALSRKILD (147 aa)). D1511 functions as the Proton donor; for dehydratase activity in the catalytic mechanism. The 78-residue stretch at 1618–1695 (PSAPSLVKRA…DFKQFLAPMS (78 aa)) folds into the Carrier 1 domain. S1655 carries the post-translational modification O-(pantetheine 4'-phosphoryl)serine. The interval 1695 to 1740 (SQGEASDGSTSDPESSSSFNGGSSTDESSAGSPVSSPPNEKVTQVE) is disordered. The segment covering 1700-1723 (SDGSTSDPESSSSFNGGSSTDESS) has biased composition (low complexity). The span at 1724 to 1740 (AGSPVSSPPNEKVTQVE) shows a compositional bias: polar residues. The 78-residue stretch at 1739–1816 (VEQHATIKEI…DVEDALGLKP (78 aa)) folds into the Carrier 2 domain. An O-(pantetheine 4'-phosphoryl)serine modification is found at S1776. Residues 1854–2126 (SPHPRSTSIL…ELGSFIGNAM (273 aa)) form a claisen cyclase domain region. S1944 functions as the For Claisen cyclase activity in the catalytic mechanism.

It catalyses the reaction 6 malonyl-CoA + acetyl-CoA + 6 H(+) = naphtopyrone YWA1 + 6 CO2 + 7 CoA + H2O. The protein operates within secondary metabolite biosynthesis. Non-reducing polyketide synthase; part of the gene cluster that mediates the biosynthesis of aurasperone B, a dimeric gamma-naphthopyrone. The first step in the biosynthesis of aurasperone B is the production of gamma-naphthopyrone precursor YWA1 by the non-reducing polyketide synthase albA, via condensation of one acetyl-CoA starter unit with 6 malonyl-CoA units. YWA1 is then methylated by aunE at position C-6 to yield foncesin which is further methylated at position C-8 by aunD to produce fonsecin B. A key enzyme in the biosynthetic pathway is the cytochrome P450 monooxygenase aunB which catalyzes the oxidative dimerization of fonsecin B to aurasperone B. AunB also catalyzes the oxidative dimerization of rubrofusarin B into aurasperone A. The sequence is that of Non-reducing polyketide synthase albA from Aspergillus niger (strain ATCC 1015 / CBS 113.46 / FGSC A1144 / LSHB Ac4 / NCTC 3858a / NRRL 328 / USDA 3528.7).